The following is an 87-amino-acid chain: MRQGIHPEYHKVIFLDTTTNFKFLSGSTKTSSETMEWEDGNEYPVIRLDISSDSHPFYTGRQKFAAADGRVERFNKKFGLKSSNDNE.

This sequence belongs to the bacterial ribosomal protein bL31 family. Type B subfamily. As to quaternary structure, part of the 50S ribosomal subunit.

This is Large ribosomal subunit protein bL31B from Staphylococcus carnosus (strain TM300).